We begin with the raw amino-acid sequence, 273 residues long: Glutamate 5-kinase (273 aa).

ATP is bound at residue Lys15. Residues Ser55, Asp142, and Asn158 each coordinate substrate. ATP-binding positions include Ser178 to Asp179 and Thr220 to Lys226.

Belongs to the glutamate 5-kinase family.

It is found in the cytoplasm. It catalyses the reaction L-glutamate + ATP = L-glutamyl 5-phosphate + ADP. Its pathway is amino-acid biosynthesis; L-proline biosynthesis; L-glutamate 5-semialdehyde from L-glutamate: step 1/2. In terms of biological role, catalyzes the transfer of a phosphate group to glutamate to form L-glutamate 5-phosphate. The polypeptide is Glutamate 5-kinase (Streptococcus pyogenes serotype M49 (strain NZ131)).